The chain runs to 363 residues: Chorismate synthase (363 aa).

2 residues coordinate NADP(+): Arg47 and Arg53. FMN is bound by residues 124-126, Gly286, 301-305, and Arg327; these read RSS and KPTAT.

This sequence belongs to the chorismate synthase family. As to quaternary structure, homotetramer. FMNH2 serves as cofactor.

The catalysed reaction is 5-O-(1-carboxyvinyl)-3-phosphoshikimate = chorismate + phosphate. It functions in the pathway metabolic intermediate biosynthesis; chorismate biosynthesis; chorismate from D-erythrose 4-phosphate and phosphoenolpyruvate: step 7/7. Its function is as follows. Catalyzes the anti-1,4-elimination of the C-3 phosphate and the C-6 proR hydrogen from 5-enolpyruvylshikimate-3-phosphate (EPSP) to yield chorismate, which is the branch point compound that serves as the starting substrate for the three terminal pathways of aromatic amino acid biosynthesis. This reaction introduces a second double bond into the aromatic ring system. In Thermosynechococcus vestitus (strain NIES-2133 / IAM M-273 / BP-1), this protein is Chorismate synthase.